Here is a 325-residue protein sequence, read N- to C-terminus: Lipoyl synthase (325 aa).

Positions 66, 71, 77, 92, 96, 99, and 303 each coordinate [4Fe-4S] cluster. Residues 78–292 (WEDREATFLI…AQFAEGLGFA (215 aa)) enclose the Radical SAM core domain.

This sequence belongs to the radical SAM superfamily. Lipoyl synthase family. It depends on [4Fe-4S] cluster as a cofactor.

It is found in the cytoplasm. The enzyme catalyses [[Fe-S] cluster scaffold protein carrying a second [4Fe-4S](2+) cluster] + N(6)-octanoyl-L-lysyl-[protein] + 2 oxidized [2Fe-2S]-[ferredoxin] + 2 S-adenosyl-L-methionine + 4 H(+) = [[Fe-S] cluster scaffold protein] + N(6)-[(R)-dihydrolipoyl]-L-lysyl-[protein] + 4 Fe(3+) + 2 hydrogen sulfide + 2 5'-deoxyadenosine + 2 L-methionine + 2 reduced [2Fe-2S]-[ferredoxin]. Its pathway is protein modification; protein lipoylation via endogenous pathway; protein N(6)-(lipoyl)lysine from octanoyl-[acyl-carrier-protein]: step 2/2. Catalyzes the radical-mediated insertion of two sulfur atoms into the C-6 and C-8 positions of the octanoyl moiety bound to the lipoyl domains of lipoate-dependent enzymes, thereby converting the octanoylated domains into lipoylated derivatives. This Mycobacterium sp. (strain JLS) protein is Lipoyl synthase.